Reading from the N-terminus, the 70-residue chain is Sec-independent protein translocase protein TatA (70 aa).

A helical transmembrane segment spans residues 1–21 (MGSFSVWHWLIVLVIVLVLFG). The disordered stretch occupies residues 42–70 (GMADEDQTPPPADANANAKTVDHKADEIK). Over residues 61-70 (TVDHKADEIK) the composition is skewed to basic and acidic residues.

Belongs to the TatA/E family. In terms of assembly, the Tat system comprises two distinct complexes: a TatABC complex, containing multiple copies of TatA, TatB and TatC subunits, and a separate TatA complex, containing only TatA subunits. Substrates initially bind to the TatABC complex, which probably triggers association of the separate TatA complex to form the active translocon.

The protein localises to the cell inner membrane. In terms of biological role, part of the twin-arginine translocation (Tat) system that transports large folded proteins containing a characteristic twin-arginine motif in their signal peptide across membranes. TatA could form the protein-conducting channel of the Tat system. The polypeptide is Sec-independent protein translocase protein TatA (Agrobacterium fabrum (strain C58 / ATCC 33970) (Agrobacterium tumefaciens (strain C58))).